A 388-amino-acid polypeptide reads, in one-letter code: Succinyl-diaminopimelate desuccinylase (388 aa).

H72 contributes to the Zn(2+) binding site. D74 is a catalytic residue. D105 lines the Zn(2+) pocket. The active-site Proton acceptor is E139. Zn(2+) contacts are provided by E140, E168, and H353.

This sequence belongs to the peptidase M20A family. DapE subfamily. As to quaternary structure, homodimer. Requires Zn(2+) as cofactor. It depends on Co(2+) as a cofactor.

The enzyme catalyses N-succinyl-(2S,6S)-2,6-diaminopimelate + H2O = (2S,6S)-2,6-diaminopimelate + succinate. The protein operates within amino-acid biosynthesis; L-lysine biosynthesis via DAP pathway; LL-2,6-diaminopimelate from (S)-tetrahydrodipicolinate (succinylase route): step 3/3. In terms of biological role, catalyzes the hydrolysis of N-succinyl-L,L-diaminopimelic acid (SDAP), forming succinate and LL-2,6-diaminopimelate (DAP), an intermediate involved in the bacterial biosynthesis of lysine and meso-diaminopimelic acid, an essential component of bacterial cell walls. This is Succinyl-diaminopimelate desuccinylase from Orientia tsutsugamushi (strain Ikeda) (Rickettsia tsutsugamushi).